Reading from the N-terminus, the 244-residue chain is Phosphoadenosine 5'-phosphosulfate reductase (244 aa).

The Nucleophile; cysteine thiosulfonate intermediate role is filled by Cys239.

It belongs to the PAPS reductase family. CysH subfamily.

The protein localises to the cytoplasm. The catalysed reaction is [thioredoxin]-disulfide + sulfite + adenosine 3',5'-bisphosphate + 2 H(+) = [thioredoxin]-dithiol + 3'-phosphoadenylyl sulfate. It functions in the pathway sulfur metabolism; hydrogen sulfide biosynthesis; sulfite from sulfate: step 3/3. Functionally, catalyzes the formation of sulfite from phosphoadenosine 5'-phosphosulfate (PAPS) using thioredoxin as an electron donor. This Citrobacter koseri (strain ATCC BAA-895 / CDC 4225-83 / SGSC4696) protein is Phosphoadenosine 5'-phosphosulfate reductase.